A 463-amino-acid chain; its full sequence is Type II NADH:quinone oxidoreductase Ndh (463 aa).

FAD-binding positions include 21-25 (GSGFG) and Val-89. Residue Glu-184 is part of the active site. FAD contacts are provided by residues Asp-322 and 333–334 (AQ). A helical transmembrane segment spans residues 387 to 407 (FSGFIAWLIWLVLHLAYLIGF).

This sequence belongs to the NADH dehydrogenase family. The cofactor is FAD.

It is found in the cell inner membrane. The catalysed reaction is a quinone + NADH + H(+) = a quinol + NAD(+). The enzyme catalyses a menaquinone + NADH + H(+) = a menaquinol + NAD(+). It carries out the reaction a ubiquinone + NADH + H(+) = a ubiquinol + NAD(+). Its activity is regulated as follows. Inhibited by phenothiazine analogs. Inhibited by 2-mercapto-quinazolinones. Not inhibited by classic inhibitors of type I NADH dehydrogenase, such as rotenone, piericidin A and pyridaben. Alternative, nonproton pumping NADH:quinone oxidoreductase that delivers electrons to the respiratory chain by oxidation of NADH and reduction of quinones. Ndh is probably the main NADH dehydrogenase of M.tuberculosis. The chain is Type II NADH:quinone oxidoreductase Ndh from Mycobacterium tuberculosis (strain ATCC 25618 / H37Rv).